The primary structure comprises 333 residues: Transaldolase (333 aa).

The Schiff-base intermediate with substrate role is filled by lysine 135.

Belongs to the transaldolase family. Type 1 subfamily. As to quaternary structure, homodimer.

Its subcellular location is the cytoplasm. It catalyses the reaction D-sedoheptulose 7-phosphate + D-glyceraldehyde 3-phosphate = D-erythrose 4-phosphate + beta-D-fructose 6-phosphate. The protein operates within carbohydrate degradation; pentose phosphate pathway; D-glyceraldehyde 3-phosphate and beta-D-fructose 6-phosphate from D-ribose 5-phosphate and D-xylulose 5-phosphate (non-oxidative stage): step 2/3. In terms of biological role, transaldolase is important for the balance of metabolites in the pentose-phosphate pathway. In Prochlorococcus marinus (strain MIT 9301), this protein is Transaldolase.